Reading from the N-terminus, the 857-residue chain is Dimethylglycine dehydrogenase, mitochondrial (857 aa).

The transit peptide at 1–43 (MLRLGALRLRGLALRSSQGRPSSAGLREGQESPPSPPEWKDRA) directs the protein to the mitochondrion. Residues 15 to 39 (RSSQGRPSSAGLREGQESPPSPPEW) form a disordered region. Residues 52-53 (CV), 73-74 (EK), and 80-88 (GSTWHAAGL) contribute to the FAD site. At His-84 the chain carries Tele-8alpha-FAD histidine. Lys-107 carries the post-translational modification N6-acetyllysine. The residue at position 141 (Lys-141) is an N6-acetyllysine; alternate. An N6-succinyllysine; alternate modification is found at Lys-141. Lys-161 carries the post-translational modification N6-acetyllysine. Val-212 contributes to the FAD binding site. Residue Lys-216 is modified to N6-acetyllysine. Residue Trp-244 participates in FAD binding. 2 positions are modified to N6-succinyllysine: Lys-310 and Lys-312. Residues Lys-328 and Lys-353 each carry the N6-acetyllysine modification. 390-395 (FGYGII) lines the FAD pocket. 3 positions are modified to N6-acetyllysine; alternate: Lys-427, Lys-469, and Lys-516. N6-succinyllysine; alternate is present on residues Lys-427, Lys-469, and Lys-516. (6S)-5,6,7,8-tetrahydrofolate is bound at residue 573–575 (ELT). Lys-648 carries the post-translational modification N6-acetyllysine; alternate. Residue Lys-648 is modified to N6-succinyllysine; alternate. (6S)-5,6,7,8-tetrahydrofolate contacts are provided by residues Tyr-669, 676-678 (ELY), and Tyr-737. N6-acetyllysine is present on Lys-757. Lys-786 carries the post-translational modification N6-acetyllysine; alternate. Position 786 is an N6-succinyllysine; alternate (Lys-786). Lys-788 carries the N6-succinyllysine modification.

The protein belongs to the GcvT family. FAD is required as a cofactor.

It localises to the mitochondrion. It carries out the reaction (6S)-5,6,7,8-tetrahydrofolyl-(gamma-L-Glu)(n) + N,N-dimethylglycine + oxidized [electron-transfer flavoprotein] + H(+) = (6R)-5,10-methylenetetrahydrofolyl-(gamma-L-Glu)(n) + sarcosine + reduced [electron-transfer flavoprotein]. It participates in amine and polyamine degradation; betaine degradation; sarcosine from betaine: step 2/2. Functionally, catalyzes the demethylation of N,N-dimethylglycine to sarcosine. Also has activity with sarcosine in vitro. In Rattus norvegicus (Rat), this protein is Dimethylglycine dehydrogenase, mitochondrial (Dmgdh).